The sequence spans 286 residues: CCR4-NOT transcription complex subunit 7 (286 aa).

A divalent metal cation contacts are provided by D40, E42, D161, D230, and E278.

The protein belongs to the CAF1 family. In terms of assembly, component of the CCR4-NOT complex. Requires Mn(2+) as cofactor. Mg(2+) is required as a cofactor. It depends on Co(2+) as a cofactor.

The protein resides in the nucleus. The protein localises to the cytoplasm. The catalysed reaction is Exonucleolytic cleavage of poly(A) to 5'-AMP.. In terms of biological role, has 3'-5' poly(A) exoribonuclease activity for synthetic poly(A) RNA substrate. Catalytic component of the CCR4-NOT complex which is one of the major cellular mRNA deadenylases and is linked to various cellular processes including bulk mRNA degradation, miRNA-mediated repression, translational repression during translational initiation and general transcription regulation. During miRNA-mediated repression the complex also seems to act as translational repressor during translational initiation. Additional complex functions may be a consequence of its influence on mRNA expression. The chain is CCR4-NOT transcription complex subunit 7 (cnot7) from Danio rerio (Zebrafish).